The primary structure comprises 284 residues: Acetyl-coenzyme A carboxylase carboxyl transferase subunit beta (284 aa).

The CoA carboxyltransferase N-terminal domain maps to 25-284; that stretch reads MWVKCPGCSA…ILGILYRPAA (260 aa). 4 residues coordinate Zn(2+): cysteine 29, cysteine 32, cysteine 48, and cysteine 51. A C4-type zinc finger spans residues 29 to 51; it reads CPGCSATLLAKDLDANLNVCPTC.

The protein belongs to the AccD/PCCB family. As to quaternary structure, acetyl-CoA carboxylase is a heterohexamer composed of biotin carboxyl carrier protein (AccB), biotin carboxylase (AccC) and two subunits each of ACCase subunit alpha (AccA) and ACCase subunit beta (AccD). Requires Zn(2+) as cofactor.

It is found in the cytoplasm. The catalysed reaction is N(6)-carboxybiotinyl-L-lysyl-[protein] + acetyl-CoA = N(6)-biotinyl-L-lysyl-[protein] + malonyl-CoA. It functions in the pathway lipid metabolism; malonyl-CoA biosynthesis; malonyl-CoA from acetyl-CoA: step 1/1. Component of the acetyl coenzyme A carboxylase (ACC) complex. Biotin carboxylase (BC) catalyzes the carboxylation of biotin on its carrier protein (BCCP) and then the CO(2) group is transferred by the transcarboxylase to acetyl-CoA to form malonyl-CoA. The sequence is that of Acetyl-coenzyme A carboxylase carboxyl transferase subunit beta from Pelobacter propionicus (strain DSM 2379 / NBRC 103807 / OttBd1).